Reading from the N-terminus, the 69-residue chain is Chondroitin proteoglycan 9 (69 aa).

Residues methionine 1 to glycine 19 form the signal peptide. O-linked (Xyl...) (chondroitin sulfate) serine glycans are attached at residues serine 25 and serine 27.

This chain is Chondroitin proteoglycan 9, found in Caenorhabditis elegans.